Consider the following 284-residue polypeptide: Non-selective voltage-gated ion channel VDAC3 (284 aa).

Cys-2 is modified (N-acetylcysteine). A Phosphothreonine modification is found at Thr-4. N6-acetyllysine occurs at positions 12, 15, and 20. 2 beta stranded membrane-spanning segments follow: residues 26 to 35 and 39 to 48; these read MVKIDLKTKS and VMEFSTSGHA. A Glycyl lysine isopeptide (Lys-Gly) (interchain with G-Cter in ubiquitin) cross-link involves residue Lys-54. A run of 3 beta stranded transmembrane segments spans residues 55-65, 70-77, and 81-90; these read ASGNLETKYKV, LTFTQKWN, and TLGTEISWEN. Lys-91 bears the N6-acetyllysine mark. The beta stranded transmembrane segment at 96–105 threads the bilayer; sequence LKLTLDTIFV. Residues Lys-110 and Lys-111 each participate in a glycyl lysine isopeptide (Lys-Gly) (interchain with G-Cter in ubiquitin) cross-link. Beta stranded transmembrane passes span 112 to 121, 124 to 131, 138 to 146, 151 to 159, 164 to 176, 179 to 186, 190 to 199, 203 to 212, 219 to 228, and 232 to 239; these read SGKLKASYKR, FSVGSNVD, TIYGWAVLA, LAGYQMSFD, KLSQ…GYKA, FQLHTHVN, EFGGSIYQKV, IETSINLAWT, RFGIAAKYML, and TSLSAKVN. At Ser-242 the chain carries Phosphoserine. NAD(+)-binding positions include 243-245 and 261-265; these read LIG and SALID. Transmembrane regions (beta stranded) follow at residues 243 to 252 and 255 to 264; these read LIGLGYTQTL and GVKLTLSALI. The residue at position 267 (Lys-267) is an N6-acetyllysine; alternate. Lys-267 is covalently cross-linked (Glycyl lysine isopeptide (Lys-Gly) (interchain with G-Cter in ubiquitin); alternate). A beta stranded membrane pass occupies residues 274 to 283; sequence HKVGLGFELE.

The protein belongs to the eukaryotic mitochondrial porin family. As to quaternary structure, interacts with ARMC12 in a TBC1D21-dependent manner. Interacts with MISFA. In terms of processing, ubiquitinated by PRKN during mitophagy, leading to its degradation and enhancement of mitophagy. Deubiquitinated by USP30.

It localises to the mitochondrion outer membrane. The protein localises to the membrane. It carries out the reaction chloride(in) = chloride(out). It catalyses the reaction K(+)(in) = K(+)(out). In terms of biological role, non-selective voltage-gated ion channel that mediates the transport of anions and cations through the mitochondrion outer membrane and plasma membrane. Forms a high-conducting channel with a stable open state and a voltage-induced closure with a mild preference for anions over cations. Involved in male fertility and sperm mitochondrial sheath formation. This is Non-selective voltage-gated ion channel VDAC3 from Pongo abelii (Sumatran orangutan).